The chain runs to 51 residues: Insulin (51 aa).

3 disulfides stabilise this stretch: cysteine 7–cysteine 37, cysteine 19–cysteine 50, and cysteine 36–cysteine 41.

The protein belongs to the insulin family. Heterodimer of a B chain and an A chain linked by two disulfide bonds.

The protein resides in the secreted. In terms of biological role, insulin decreases blood glucose concentration. It increases cell permeability to monosaccharides, amino acids and fatty acids. It accelerates glycolysis, the pentose phosphate cycle, and glycogen synthesis in liver. In Acomys cahirinus (Cairo spiny mouse), this protein is Insulin (INS).